The following is a 66-amino-acid chain: Gallinacin-5 (66 aa).

The N-terminal stretch at 1-19 (MQILTLLFAVLLLMLRAEP) is a signal peptide. The propeptide occupies 20–25 (GLSLAR). Intrachain disulfides connect Cys-31–Cys-59, Cys-38–Cys-53, and Cys-43–Cys-60.

The protein belongs to the beta-defensin family. As to expression, strong expression in the tongue and bone marrow. Low expression in the esophagus, trachea, lung, brain and ovary. Expressed in the ovarian stroma, but not in the ovarian follicles.

It is found in the secreted. It localises to the cytoplasmic granule. Functionally, has bactericidal activity. This chain is Gallinacin-5 (GAL5), found in Gallus gallus (Chicken).